We begin with the raw amino-acid sequence, 175 residues long: Protein-export protein SecB (175 aa).

Polar residues predominate over residues 153–163 (QQQPDAANGND). Residues 153–175 (QQQPDAANGNDSGIILPPGATRQ) form a disordered region.

It belongs to the SecB family. In terms of assembly, homotetramer, a dimer of dimers. One homotetramer interacts with 1 SecA dimer.

The protein resides in the cytoplasm. Functionally, one of the proteins required for the normal export of preproteins out of the cell cytoplasm. It is a molecular chaperone that binds to a subset of precursor proteins, maintaining them in a translocation-competent state. It also specifically binds to its receptor SecA. This Bordetella bronchiseptica (strain ATCC BAA-588 / NCTC 13252 / RB50) (Alcaligenes bronchisepticus) protein is Protein-export protein SecB.